A 381-amino-acid chain; its full sequence is E3 ubiquitin-protein ligase RNF13 (381 aa).

A signal peptide spans 1–34 (MLLSIGMLMLSATQVYTILTVQLFAFLNLLPVEA). Over 35–182 (DILAYNFENA…VPEFSLPLEY (148 aa)) the chain is Lumenal. The 96-residue stretch at 65–160 (KGFLINSKPE…GESSANSLKD (96 aa)) folds into the PA domain. Residue asparagine 88 is glycosylated (N-linked (GlcNAc...) asparagine). The helical transmembrane segment at 183 to 203 (YLIPFLIIVGICLILIVIFMI) threads the bilayer. Residues 204–381 (TKFVQDRHRA…ERDYNIANTV (178 aa)) are Cytoplasmic-facing. The RING-type; atypical zinc finger occupies 240–282 (CAICLDEYEDGDKLRILPCSHAYHCKCVDPWLTKTKKTCPVCK). Residues 285–381 (VVPSQGDSDS…ERDYNIANTV (97 aa)) form a disordered region. Composition is skewed to acidic residues over residues 292-304 (SDSDTDSSQEENE) and 339-357 (SDYEEDDNEDTDSSDAENE).

As to quaternary structure, interacts with ERN1. In terms of processing, autoubiquitinated. As to expression, widely expressed (at protein level). In normal pancreas, expressed in islets, but not in ducts, nor in acini (at protein level).

The protein resides in the endoplasmic reticulum membrane. It is found in the late endosome membrane. The protein localises to the lysosome membrane. It localises to the nucleus inner membrane. It carries out the reaction S-ubiquitinyl-[E2 ubiquitin-conjugating enzyme]-L-cysteine + [acceptor protein]-L-lysine = [E2 ubiquitin-conjugating enzyme]-L-cysteine + N(6)-ubiquitinyl-[acceptor protein]-L-lysine.. The protein operates within protein modification; protein ubiquitination. In terms of biological role, E3 ubiquitin-protein ligase that regulates cell proliferation. Involved in apoptosis regulation. Mediates ER stress-induced activation of JNK signaling pathway and apoptosis by promoting ERN1 activation and splicing of XBP1 mRNA. Also involved in protein trafficking and localization. This Homo sapiens (Human) protein is E3 ubiquitin-protein ligase RNF13.